Reading from the N-terminus, the 742-residue chain is Protein CdcH (742 aa).

ATP contacts are provided by residues 230-237 (GPPGTGKT) and 503-510 (GPPGTGKT). The disordered stretch occupies residues 722-742 (FKGSQGPNVNSRQGSEHIGFQ). Over residues 723–734 (KGSQGPNVNSRQ) the composition is skewed to polar residues.

The protein belongs to the AAA ATPase family. CDC48 subfamily.

Its function is as follows. May be part of a transduction pathway connecting light to cell division. In Halobacterium salinarum (strain ATCC 700922 / JCM 11081 / NRC-1) (Halobacterium halobium), this protein is Protein CdcH (cdcH).